Consider the following 446-residue polypeptide: Tubulin beta-1 chain (446 aa).

The MREI motif signature appears at 1 to 4 (MREI). Positions 11, 69, 138, 142, 143, 144, 204, and 226 each coordinate GTP. E69 is a Mg(2+) binding site. Residues 426 to 446 (QDATAEEEGEFEEEGEYEDGA) form a disordered region. A compositionally biased stretch (acidic residues) spans 429 to 446 (TAEEEGEFEEEGEYEDGA). E438 carries the 5-glutamyl polyglutamate modification.

It belongs to the tubulin family. In terms of assembly, dimer of alpha and beta chains. A typical microtubule is a hollow water-filled tube with an outer diameter of 25 nm and an inner diameter of 15 nM. Alpha-beta heterodimers associate head-to-tail to form protofilaments running lengthwise along the microtubule wall with the beta-tubulin subunit facing the microtubule plus end conferring a structural polarity. Microtubules usually have 13 protofilaments but different protofilament numbers can be found in some organisms and specialized cells. The cofactor is Mg(2+). Post-translationally, some glutamate residues at the C-terminus are polyglycylated, resulting in polyglycine chains on the gamma-carboxyl group. Glycylation is mainly limited to tubulin incorporated into axonemes (cilia and flagella) whereas glutamylation is prevalent in neuronal cells, centrioles, axonemes, and the mitotic spindle. Both modifications can coexist on the same protein on adjacent residues, and lowering polyglycylation levels increases polyglutamylation, and reciprocally. The precise function of polyglycylation is still unclear. Some glutamate residues at the C-terminus are polyglutamylated, resulting in polyglutamate chains on the gamma-carboxyl group. Polyglutamylation plays a key role in microtubule severing by spastin (SPAST). SPAST preferentially recognizes and acts on microtubules decorated with short polyglutamate tails: severing activity by SPAST increases as the number of glutamates per tubulin rises from one to eight, but decreases beyond this glutamylation threshold. In terms of tissue distribution, brain.

It is found in the cytoplasm. The protein resides in the cytoskeleton. Tubulin is the major constituent of microtubules, a cylinder consisting of laterally associated linear protofilaments composed of alpha- and beta-tubulin heterodimers. Microtubules grow by the addition of GTP-tubulin dimers to the microtubule end, where a stabilizing cap forms. Below the cap, tubulin dimers are in GDP-bound state, owing to GTPase activity of alpha-tubulin. The sequence is that of Tubulin beta-1 chain (tubb1) from Notothenia neglecta (Yellowbelly rockcod).